Here is a 393-residue protein sequence, read N- to C-terminus: Pre-mRNA-splicing regulator WTAP (393 aa).

The tract at residues 242 to 393 (QIQISGNRTP…SSVNVQGSVL (152 aa)) is disordered. Residues 254 to 267 (EPKDEGETSGKDCG) show a composition bias toward basic and acidic residues. Composition is skewed to polar residues over residues 272–286 (GPSN…THSS) and 321–353 (DGSS…SNDT). Residues 354-365 (DSNHDSQEEKPV) show a composition bias toward basic and acidic residues. Over residues 369-393 (GNRTVSSRHLQNGLDSSVNVQGSVL) the composition is skewed to polar residues.

The protein belongs to the fl(2)d family. Component of the WMM complex, a N6-methyltransferase complex composed of a catalytic subcomplex, named MAC, and of an associated subcomplex, named MACOM. Component of the MACOM subcomplex.

The protein localises to the nucleus speckle. The protein resides in the nucleus. It localises to the nucleoplasm. Associated component of the WMM complex, a complex that mediates N6-methyladenosine (m6A) methylation of RNAs, a modification that plays a role in the efficiency of mRNA splicing and RNA processing. The chain is Pre-mRNA-splicing regulator WTAP from Xenopus laevis (African clawed frog).